Consider the following 481-residue polypeptide: Ankyrin repeat, SAM and basic leucine zipper domain-containing protein 1 (481 aa).

Residues 1-16 (MASGGLRGLAVAGGGE) show a composition bias toward gly residues. The segment at 1 to 23 (MASGGLRGLAVAGGGESSDSEDD) is disordered. Residues Ser17, Ser18, and Ser20 each carry the phosphoserine modification. ANK repeat units lie at residues 45-74 (EKNE…SVDS), 78-107 (YGWT…NASF), 110-144 (DKQT…DPNV), 148-177 (RLMT…EVNT), 181-210 (NGYT…NKML), and 214-243 (DGKI…PLEG). Residues 272 to 334 (SYTAFGDLEI…KILSALKELE (63 aa)) form the SAM domain.

As to quaternary structure, interacts with DDX4, PIWIL1, RANBP9 and TDRD1.

It localises to the cytoplasm. Its function is as follows. Plays a central role during spermatogenesis by repressing transposable elements and preventing their mobilization, which is essential for the germline integrity. Acts via the piRNA metabolic process, which mediates the repression of transposable elements during meiosis by forming complexes composed of piRNAs and Piwi proteins and governs the methylation and subsequent repression of transposons. Its association with pi-bodies suggests a participation in the primary piRNAs metabolic process. Required prior to the pachytene stage to facilitate the production of multiple types of piRNAs, including those associated with repeats involved in the regulation of retrotransposons. May act by mediating protein-protein interactions during germ cell maturation. This Microcebus murinus (Gray mouse lemur) protein is Ankyrin repeat, SAM and basic leucine zipper domain-containing protein 1 (ASZ1).